We begin with the raw amino-acid sequence, 500 residues long: Cytochrome P450 71B38 (500 aa).

Residues 3-23 (IFLCFLLLLPLSLILFKKLLP) form a helical membrane-spanning segment. A heme-binding site is contributed by C441.

It belongs to the cytochrome P450 family. The cofactor is heme.

The protein resides in the membrane. This Arabidopsis thaliana (Mouse-ear cress) protein is Cytochrome P450 71B38 (CYP71B38).